A 23-amino-acid polypeptide reads, in one-letter code: Protein YsaE (23 aa).

In Escherichia coli (strain K12), this protein is Protein YsaE.